A 159-amino-acid polypeptide reads, in one-letter code: RNA pyrophosphohydrolase (159 aa).

Positions 6–149 constitute a Nudix hydrolase domain; the sequence is GFRPNVGIIL…KREVYRRALK (144 aa). The short motif at 38–59 is the Nudix box element; that stretch reads GGINDRESPEEALYRELNEEVG.

This sequence belongs to the Nudix hydrolase family. RppH subfamily. It depends on a divalent metal cation as a cofactor.

In terms of biological role, accelerates the degradation of transcripts by removing pyrophosphate from the 5'-end of triphosphorylated RNA, leading to a more labile monophosphorylated state that can stimulate subsequent ribonuclease cleavage. The chain is RNA pyrophosphohydrolase from Ectopseudomonas mendocina (strain ymp) (Pseudomonas mendocina).